The chain runs to 62 residues: uncharacterized protein (62 aa).

The chain crosses the membrane as a helical span at residues 15–37 (FSSGVLISNFLLFNFIIISHSSL). The span at 41–56 (TTTTTTTTTTTTNTKS) shows a compositional bias: low complexity. The tract at residues 41 to 62 (TTTTTTTTTTTTNTKSTLHRSG) is disordered.

It localises to the membrane. This is an uncharacterized protein from Dictyostelium discoideum (Social amoeba).